A 380-amino-acid polypeptide reads, in one-letter code: L-prolyl-[peptidyl-carrier protein] dehydrogenase (380 aa).

The active-site Proton acceptor is glutamate 243. Positions 269 and 280 each coordinate FAD.

Belongs to the acyl-CoA dehydrogenase family. FAD is required as a cofactor.

It carries out the reaction L-prolyl-[peptidyl-carrier protein] + 2 oxidized [electron-transfer flavoprotein] + H(+) = (1H-pyrrole-2-carbonyl)-[peptidyl-carrier protein] + 2 reduced [electron-transfer flavoprotein]. Involved in the biosynthesis of pyoluteorin. Catalyzes the desaturation of the L-prolyl-[PltL] to yield 1H-pyrrole-2-carbonyl-[PltL]. This Pseudomonas fluorescens (strain ATCC BAA-477 / NRRL B-23932 / Pf-5) protein is L-prolyl-[peptidyl-carrier protein] dehydrogenase.